The sequence spans 169 residues: S-ribosylhomocysteine lyase (169 aa).

His54, His58, and Cys128 together coordinate Fe cation.

The protein belongs to the LuxS family. In terms of assembly, homodimer. The cofactor is Fe cation.

It catalyses the reaction S-(5-deoxy-D-ribos-5-yl)-L-homocysteine = (S)-4,5-dihydroxypentane-2,3-dione + L-homocysteine. Its function is as follows. Involved in the synthesis of autoinducer 2 (AI-2) which is secreted by bacteria and is used to communicate both the cell density and the metabolic potential of the environment. The regulation of gene expression in response to changes in cell density is called quorum sensing. Catalyzes the transformation of S-ribosylhomocysteine (RHC) to homocysteine (HC) and 4,5-dihydroxy-2,3-pentadione (DPD). The protein is S-ribosylhomocysteine lyase of Shewanella sp. (strain MR-7).